The primary structure comprises 260 residues: Voltage-dependent calcium channel gamma-6 subunit (260 aa).

Positions 14 to 33 are disordered; it reads RRGAAGRRRAHGQGRSGLTP. Basic residues predominate over residues 15–25; it reads RGAAGRRRAHG. Helical transmembrane passes span 43 to 63, 143 to 163, 169 to 189, and 221 to 241; these read LLLAAVGATLAVLSVGTEFWV, VIAVLGLAVMALGCLCIIMVL, FLLRVGAVCFGLSGLLLLVSL, and LGCGVGAGLILLLGAGCFLLL.

It belongs to the PMP-22/EMP/MP20 family. CACNG subfamily. As to quaternary structure, interacts with CACNA1C. Identified in a complex with the L-type calcium channel subunits CACNA1C, CACNA2D1 and either CACNB1 or CACNB2. Detected in heart left ventricle.

It localises to the cell membrane. Functionally, regulates the activity of L-type calcium channels that contain CACNA1C as pore-forming subunit. The polypeptide is Voltage-dependent calcium channel gamma-6 subunit (CACNG6) (Homo sapiens (Human)).